The primary structure comprises 356 residues: Cyclin-A1-4 (356 aa).

The protein belongs to the cyclin family. Cyclin AB subfamily.

In Oryza sativa subsp. japonica (Rice), this protein is Cyclin-A1-4 (CYCA1-4).